A 360-amino-acid polypeptide reads, in one-letter code: Ribosomal RNA large subunit methyltransferase M (360 aa).

Residues Ser-187, 220–223 (CPGG), Asp-239, Asp-259, and Asp-276 each bind S-adenosyl-L-methionine. Catalysis depends on Lys-305, which acts as the Proton acceptor.

It belongs to the class I-like SAM-binding methyltransferase superfamily. RNA methyltransferase RlmE family. RlmM subfamily. Monomer.

It localises to the cytoplasm. It catalyses the reaction cytidine(2498) in 23S rRNA + S-adenosyl-L-methionine = 2'-O-methylcytidine(2498) in 23S rRNA + S-adenosyl-L-homocysteine + H(+). Its function is as follows. Catalyzes the 2'-O-methylation at nucleotide C2498 in 23S rRNA. The protein is Ribosomal RNA large subunit methyltransferase M of Photobacterium profundum (strain SS9).